The sequence spans 144 residues: Small ribosomal subunit protein eS17 (144 aa).

This sequence belongs to the eukaryotic ribosomal protein eS17 family.

The chain is Small ribosomal subunit protein eS17 (RPS17) from Solanum lycopersicum (Tomato).